Here is a 275-residue protein sequence, read N- to C-terminus: Elongation factor Ts (275 aa).

The tract at residues 76–79 (TDFV) is involved in Mg(2+) ion dislocation from EF-Tu.

The protein belongs to the EF-Ts family.

It is found in the cytoplasm. In terms of biological role, associates with the EF-Tu.GDP complex and induces the exchange of GDP to GTP. It remains bound to the aminoacyl-tRNA.EF-Tu.GTP complex up to the GTP hydrolysis stage on the ribosome. This is Elongation factor Ts from Mycobacterium avium (strain 104).